Reading from the N-terminus, the 1896-residue chain is Obscurin-like protein 1 (1896 aa).

Serine 10 carries the post-translational modification Phosphoserine. Residues 12-100 (PCFLRFPRPV…GEAYAAAAVT (89 aa)) enclose the Ig-like 1 domain. The tract at residues 17–19 (FPR) is interaction with TTN. A disulfide bridge connects residues cysteine 33 and cysteine 84. Residues 85-94 (RARNAAGEAY) form an interaction with TTN region. Positions 106-127 (ASDPELQPAERPLPSPGSGEGA) are disordered. 3 consecutive Ig-like domains span residues 128-225 (PVFL…ALLQ), 243-330 (PVVE…QTLS), and 339-425 (PRLR…ANVT). Cystine bridges form between cysteine 149/cysteine 209, cysteine 267/cysteine 319, and cysteine 362/cysteine 412. Residues 517-615 (PPGPPILAEM…FHGSAHLVPT (99 aa)) enclose the Fibronectin type-III domain. Ig-like domains lie at 714 to 800 (PVHI…FGVT), 804 to 893 (PPVH…VTIT), 902 to 982 (PSGK…FTVT), 986 to 1075 (PPVR…VTVT), 1078 to 1172 (PERI…PPVQ), 1174 to 1261 (LALE…FTVQ), 1265 to 1357 (PPVR…VEEP), 1357 to 1534 (PLLV…ARLS), 1628 to 1720 (PVTI…RTVA), and 1794 to 1896 (PAQS…VEGN). 6 disulfides stabilise this stretch: cysteine 738-cysteine 788, cysteine 829-cysteine 879, cysteine 920-cysteine 970, cysteine 1011-cysteine 1061, cysteine 1103-cysteine 1153, and cysteine 1195-cysteine 1245. Cystine bridges form between cysteine 1381-cysteine 1522 and cysteine 1650-cysteine 1700.

In terms of assembly, component of the 3M complex, composed of core components CUL7, CCDC8 and OBSL1. Interacts with CCDC8. Interacts with CUL7; the interaction is direct. Interacts with FBXW8. Interacts (via N-terminal Ig-like domain) with TTN/titin (via C-terminal Ig-like domain); the interaction is direct. Widely expressed, with predominant levels found in the heart.

The protein localises to the cytoplasm. Its subcellular location is the cytoskeleton. It is found in the microtubule organizing center. The protein resides in the centrosome. It localises to the perinuclear region. The protein localises to the golgi apparatus. Core component of the 3M complex, a complex required to regulate microtubule dynamics and genome integrity. It is unclear how the 3M complex regulates microtubules, it could act by controlling the level of a microtubule stabilizer. Acts as a regulator of the Cul7-RING(FBXW8) ubiquitin-protein ligase, playing a critical role in the ubiquitin ligase pathway that regulates Golgi morphogenesis and dendrite patterning in brain. Required to localize CUL7 to the Golgi apparatus in neurons. This is Obscurin-like protein 1 from Homo sapiens (Human).